The following is a 383-amino-acid chain: Succinyl-diaminopimelate desuccinylase (383 aa).

Residue His-73 coordinates Zn(2+). The active site involves Asp-75. Asp-107 provides a ligand contact to Zn(2+). Glu-141 functions as the Proton acceptor in the catalytic mechanism. Positions 142, 170, and 356 each coordinate Zn(2+).

This sequence belongs to the peptidase M20A family. DapE subfamily. Homodimer. Requires Zn(2+) as cofactor. Co(2+) serves as cofactor.

The catalysed reaction is N-succinyl-(2S,6S)-2,6-diaminopimelate + H2O = (2S,6S)-2,6-diaminopimelate + succinate. The protein operates within amino-acid biosynthesis; L-lysine biosynthesis via DAP pathway; LL-2,6-diaminopimelate from (S)-tetrahydrodipicolinate (succinylase route): step 3/3. In terms of biological role, catalyzes the hydrolysis of N-succinyl-L,L-diaminopimelic acid (SDAP), forming succinate and LL-2,6-diaminopimelate (DAP), an intermediate involved in the bacterial biosynthesis of lysine and meso-diaminopimelic acid, an essential component of bacterial cell walls. The chain is Succinyl-diaminopimelate desuccinylase from Pseudomonas entomophila (strain L48).